A 141-amino-acid polypeptide reads, in one-letter code: Nucleoside triphosphatase NudI (141 aa).

The Nudix hydrolase domain occupies 1-141; it reads MRQRTIVCPL…RHTLALKGLL (141 aa). The Nudix box motif lies at 38–59; it reads GGVEPGERIEEALRREIREELG.

Belongs to the Nudix hydrolase family. NudI subfamily. As to quaternary structure, monomer. The cofactor is Mg(2+).

The enzyme catalyses a ribonucleoside 5'-triphosphate + H2O = a ribonucleoside 5'-phosphate + diphosphate + H(+). It carries out the reaction a 2'-deoxyribonucleoside 5'-triphosphate + H2O = a 2'-deoxyribonucleoside 5'-phosphate + diphosphate + H(+). It catalyses the reaction dUTP + H2O = dUMP + diphosphate + H(+). The catalysed reaction is dTTP + H2O = dTMP + diphosphate + H(+). The enzyme catalyses dCTP + H2O = dCMP + diphosphate + H(+). Catalyzes the hydrolysis of nucleoside triphosphates, with a preference for pyrimidine deoxynucleoside triphosphates (dUTP, dTTP and dCTP). This chain is Nucleoside triphosphatase NudI, found in Salmonella newport (strain SL254).